Here is a 327-residue protein sequence, read N- to C-terminus: Arabinose 5-phosphate isomerase KdsD (327 aa).

The region spanning 41 to 183 is the SIS domain; sequence ILENNRDKSR…AIALLKAKNF (143 aa). Substrate is bound by residues 74–75, His-81, His-87, 113–122, 147–149, Thr-221, and Glu-273; these read GT, GLLPMIKHLD, and HVD. His-81 is a binding site for Zn(2+). Positions 209-268 constitute a CBS 1 domain; it reads MRKGNEIPIVKPTDNIRKAILEISDKGVGNTLVAENNTLLGIFTDGDLRRMFEAESFNSQ. Residues 275-327 form the CBS 2 domain; the sequence is MTKNPKSISKEEMAITALEKMEKYEITSLAVVDNGHNILGIVTMHDLIKLELR.

This sequence belongs to the SIS family. GutQ/KpsF subfamily. In terms of assembly, homotetramer.

The catalysed reaction is D-arabinose 5-phosphate = D-ribulose 5-phosphate. The protein operates within carbohydrate biosynthesis; 3-deoxy-D-manno-octulosonate biosynthesis; 3-deoxy-D-manno-octulosonate from D-ribulose 5-phosphate: step 1/3. It functions in the pathway bacterial outer membrane biogenesis; lipopolysaccharide biosynthesis. Its activity is regulated as follows. Inhibited by hydroxamates, mimicking the putative enediol reaction intermediate. Most potent inhibition, with an IC(50) of 0.7 uM, is obtained with the 4 carbon-based hydroxamate containing acetyl moieties. Involved in the biosynthesis of 3-deoxy-D-manno-octulosonate (KDO), a unique 8-carbon sugar component of lipopolysaccharides (LPSs). Catalyzes the reversible aldol-ketol isomerization between D-ribulose 5-phosphate (Ru5P) and D-arabinose 5-phosphate (A5P). The polypeptide is Arabinose 5-phosphate isomerase KdsD (kdsD) (Francisella tularensis subsp. tularensis (strain SCHU S4 / Schu 4)).